Here is a 376-residue protein sequence, read N- to C-terminus: Succinyl-diaminopimelate desuccinylase (376 aa).

Position 74 (His-74) interacts with Zn(2+). Asp-76 is a catalytic residue. Asp-105 contacts Zn(2+). Glu-135 (proton acceptor) is an active-site residue. Zn(2+)-binding residues include Glu-136, Glu-164, and His-349.

The protein belongs to the peptidase M20A family. DapE subfamily. As to quaternary structure, homodimer. Zn(2+) is required as a cofactor. It depends on Co(2+) as a cofactor.

It carries out the reaction N-succinyl-(2S,6S)-2,6-diaminopimelate + H2O = (2S,6S)-2,6-diaminopimelate + succinate. It participates in amino-acid biosynthesis; L-lysine biosynthesis via DAP pathway; LL-2,6-diaminopimelate from (S)-tetrahydrodipicolinate (succinylase route): step 3/3. In terms of biological role, catalyzes the hydrolysis of N-succinyl-L,L-diaminopimelic acid (SDAP), forming succinate and LL-2,6-diaminopimelate (DAP), an intermediate involved in the bacterial biosynthesis of lysine and meso-diaminopimelic acid, an essential component of bacterial cell walls. The sequence is that of Succinyl-diaminopimelate desuccinylase from Zymomonas mobilis subsp. mobilis (strain ATCC 31821 / ZM4 / CP4).